A 331-amino-acid chain; its full sequence is Ketol-acid reductoisomerase (NADP(+)) (331 aa).

The KARI N-terminal Rossmann domain maps to 2-182; it reads VEIYYDDDAN…GGTRAGALRT (181 aa). Residues 25 to 28, Ser-51, and Ser-53 each bind NADP(+); that span reads FGSQ. The active site involves His-108. Gly-134 provides a ligand contact to NADP(+). The region spanning 183–328 is the KARI C-terminal knotted domain; it reads TFTEETETDL…GKLRPMMSWI (146 aa). Mg(2+)-binding residues include Asp-191, Glu-195, Glu-227, and Glu-231. Residue Ser-252 participates in substrate binding.

The protein belongs to the ketol-acid reductoisomerase family. The cofactor is Mg(2+).

It catalyses the reaction (2R)-2,3-dihydroxy-3-methylbutanoate + NADP(+) = (2S)-2-acetolactate + NADPH + H(+). The catalysed reaction is (2R,3R)-2,3-dihydroxy-3-methylpentanoate + NADP(+) = (S)-2-ethyl-2-hydroxy-3-oxobutanoate + NADPH + H(+). It participates in amino-acid biosynthesis; L-isoleucine biosynthesis; L-isoleucine from 2-oxobutanoate: step 2/4. Its pathway is amino-acid biosynthesis; L-valine biosynthesis; L-valine from pyruvate: step 2/4. Involved in the biosynthesis of branched-chain amino acids (BCAA). Catalyzes an alkyl-migration followed by a ketol-acid reduction of (S)-2-acetolactate (S2AL) to yield (R)-2,3-dihydroxy-isovalerate. In the isomerase reaction, S2AL is rearranged via a Mg-dependent methyl migration to produce 3-hydroxy-3-methyl-2-ketobutyrate (HMKB). In the reductase reaction, this 2-ketoacid undergoes a metal-dependent reduction by NADPH to yield (R)-2,3-dihydroxy-isovalerate. The chain is Ketol-acid reductoisomerase (NADP(+)) from Parafrankia sp. (strain EAN1pec).